Here is a 114-residue protein sequence, read N- to C-terminus: uncharacterized protein (114 aa).

Helical transmembrane passes span 58 to 78 (CLLGVGAVGTFISTFPQFFLL) and 94 to 114 (SISYAASAIFSFSIFFFFCLA).

It is found in the membrane. This is an uncharacterized protein from Saccharomyces cerevisiae (strain ATCC 204508 / S288c) (Baker's yeast).